The following is a 269-amino-acid chain: Shikimate dehydrogenase (NADP(+)) (269 aa).

Shikimate is bound by residues 17–19 and Thr64; that span reads SKS. The active-site Proton acceptor is Lys68. Glu80 is a binding site for NADP(+). 2 residues coordinate shikimate: Asn89 and Asp105. NADP(+)-binding positions include 130–134, 154–159, and Met213; these read GAGGA and NRTHAK. Tyr215 is a shikimate binding site. Gly237 serves as a coordination point for NADP(+).

It belongs to the shikimate dehydrogenase family. Homodimer.

The enzyme catalyses shikimate + NADP(+) = 3-dehydroshikimate + NADPH + H(+). The protein operates within metabolic intermediate biosynthesis; chorismate biosynthesis; chorismate from D-erythrose 4-phosphate and phosphoenolpyruvate: step 4/7. Involved in the biosynthesis of the chorismate, which leads to the biosynthesis of aromatic amino acids. Catalyzes the reversible NADPH linked reduction of 3-dehydroshikimate (DHSA) to yield shikimate (SA). The chain is Shikimate dehydrogenase (NADP(+)) from Neisseria pharyngis.